Here is a 1663-residue protein sequence, read N- to C-terminus: Cortactin-binding protein 2 (1663 aa).

Disordered regions lie at residues 1 to 23, 203 to 222, 367 to 440, 454 to 478, and 498 to 616; these read MATDGASCEPDLSRAPEDAAGAA, KKKTNELEEELSAEKRRSTE, GASV…LHPG, GNANDPDQNGNTTQSPPSRDVSPTS, and RFTS…PKPS. A coiled-coil region spans residues 119–276; sequence KKMQERMSAQ…EQLKRGSDSK (158 aa). Residues 386–396 are compositionally biased toward low complexity; it reads PSTGSTPDPTS. R498 carries the post-translational modification Asymmetric dimethylarginine. Positions 583 to 593 are enriched in polar residues; the sequence is TVASTPSSLPQ. 6 ANK repeats span residues 709–739, 743–772, 776–805, 809–838, 842–871, and 912–942; these read GRPTLLQQAAAQGNVTLLSMLLNEEGLDINY, DGHSALYSAAKNGHTDCVRLLLSAEAQVNA, NGFTPLCAAAAQGHFECVELLISYDANINH, GGQTPLYLACKNGNKECIKLLLEAGTNRSV, DGWTPVHAAVDTGNVDSLKLLMYHRIPAHG, and EGWTAAHIAASKGFKNCLEILCRHGGLEPER. Residues 1449 to 1482 form a disordered region; that stretch reads KGESGAWRKVNTSPRRKSGRFSLPTWNKPDLSTE. Residue S1524 is modified to Phosphoserine. The segment at 1581 to 1663 is disordered; it reads QKEVSPLSSH…KNEHLEKPNK (83 aa). Residues 1582–1599 are compositionally biased toward polar residues; sequence KEVSPLSSHQTTECSNSK. Over residues 1624–1638 the composition is skewed to low complexity; the sequence is SQNTKRSSSSSNTRQ. Over residues 1639–1648 the composition is skewed to polar residues; sequence IEINNNSKEV. Over residues 1653 to 1663 the composition is skewed to basic and acidic residues; it reads HKNEHLEKPNK.

Interacts with CTTN/cortactin SH3 domain. Interacts with STRN, STRN4/zinedin and MOB4/phocein; this interactions mediate the association with the STRIPAK core complex and may regulate dendritic spine distribution of the STRIPAK complex in hippocampal neurons. Activation of glutamate receptors weakens the interaction with STRN and STRN4. Highest expression in brain. Also expressed in kidney, pancreas, lung, heart, liver, skeletal muscle and placenta.

The protein localises to the cytoplasm. It localises to the cell cortex. The protein resides in the cell projection. Its subcellular location is the dendritic spine. Regulates the dendritic spine distribution of CTTN/cortactin in hippocampal neurons, and thus controls dendritic spinogenesis and dendritic spine maintenance. Associates with the striatin-interacting phosphatase and kinase (STRIPAK) core complex to regulate dendritic spine distribution of the STRIPAK complex in hippocampal neurons. The protein is Cortactin-binding protein 2 of Homo sapiens (Human).